A 248-amino-acid chain; its full sequence is tRNA pseudouridine synthase A (248 aa).

Asp53 functions as the Nucleophile in the catalytic mechanism. Residue Tyr111 coordinates substrate.

This sequence belongs to the tRNA pseudouridine synthase TruA family. As to quaternary structure, homodimer.

The enzyme catalyses uridine(38/39/40) in tRNA = pseudouridine(38/39/40) in tRNA. Functionally, formation of pseudouridine at positions 38, 39 and 40 in the anticodon stem and loop of transfer RNAs. In Listeria monocytogenes serotype 4a (strain HCC23), this protein is tRNA pseudouridine synthase A.